Consider the following 415-residue polypeptide: UV excision repair protein RAD23 homolog B (415 aa).

The Ubiquitin-like domain occupies 1–79 (MQVTLKTLQQ…VVVMVTKPKA (79 aa)). Positions 80 to 175 (VTSAVPATTQ…STPGDSSRSN (96 aa)) are disordered. Positions 84 to 143 (VPATTQQSSSPSTTTVSSSPAAAVAQAPAPTPALAPTSTPASTTPASTTASSEPAPTGAT) are enriched in low complexity. Residue Thr155 is modified to Phosphothreonine. 2 positions are modified to phosphoserine: Ser160 and Ser174. Thr186 is modified (phosphothreonine). One can recognise a UBA 1 domain in the interval 188-228 (QSYENMVTEIMSMGYEREQVIAALRASFNNPDRAVEYLLMG). Position 199 is a phosphoserine (Ser199). Phosphotyrosine is present on Tyr202. The STI1 domain maps to 274–317 (HPLEFLRNQPQFQQMRQIIQQNPSLLPALLQQIGRENPQLLQQI). A disordered region spans residues 334 to 355 (EAGGQGGGGGGGGGGGGGGGGI). Residues 336 to 355 (GGQGGGGGGGGGGGGGGGGI) show a composition bias toward gly residues. The 41-residue stretch at 370–410 (PQEKEAIERLKALGFPEGLVIQAYFACEKNENLAANFLLQQ) folds into the UBA 2 domain.

Belongs to the RAD23 family. As to quaternary structure, component of the XPC complex composed of XPC, RAD23B and CETN2. Interacts with NGLY1 and PSMC1. Interacts with ATXN3. Interacts with AMFR. Interacts with VCP; the interaction is indirect and mediated by NGLY1.

It localises to the nucleus. Its subcellular location is the cytoplasm. Multiubiquitin chain receptor involved in modulation of proteasomal degradation. Binds to polyubiquitin chains. Proposed to be capable to bind simultaneously to the 26S proteasome and to polyubiquitinated substrates and to deliver ubiquitinated proteins to the proteasome. May play a role in endoplasmic reticulum-associated degradation (ERAD) of misfolded glycoproteins by association with PNGase and delivering deglycosylated proteins to the proteasome. In terms of biological role, involved in global genome nucleotide excision repair (GG-NER) by acting as component of the XPC complex. Cooperatively with Cetn2 appears to stabilize Xpc. May protect Xpc from proteasomal degradation. Its function is as follows. The XPC complex is proposed to represent the first factor bound at the sites of DNA damage and together with other core recognition factors, Xpa, RPA and the TFIIH complex, is part of the pre-incision (or initial recognition) complex. The XPC complex recognizes a wide spectrum of damaged DNA characterized by distortions of the DNA helix such as single-stranded loops, mismatched bubbles or single-stranded overhangs. The orientation of XPC complex binding appears to be crucial for inducing a productive NER. XPC complex is proposed to recognize and to interact with unpaired bases on the undamaged DNA strand which is followed by recruitment of the TFIIH complex and subsequent scanning for lesions in the opposite strand in a 5'-to-3' direction by the NER machinery. Cyclobutane pyrimidine dimers (CPDs) which are formed upon UV-induced DNA damage esacpe detection by the XPC complex due to a low degree of structural perurbation. Instead they are detected by the UV-DDB complex which in turn recruits and cooperates with the XPC complex in the respective DNA repair. In vitro, the XPC:RAD23B dimer is sufficient to initiate NER; it preferentially binds to cisplatin and UV-damaged double-stranded DNA and also binds to a variety of chemically and structurally diverse DNA adducts. XPC:RAD23B contacts DNA both 5' and 3' of a cisplatin lesion with a preference for the 5' side. Xpc:Rad22b induces a bend in DNA upon binding. Xpc:Rad23b stimulates the activity of DNA glycosylases Tdg and Smug1. In Rattus norvegicus (Rat), this protein is UV excision repair protein RAD23 homolog B (Rad23b).